A 596-amino-acid chain; its full sequence is Probable translation initiation factor IF-2 (596 aa).

Positions 3–220 (IRSPIVSVLG…MLLGLAQEYL (218 aa)) constitute a tr-type G domain. Residues 12–19 (GHVDHGKT) form a G1 region. 12–19 (GHVDHGKT) contributes to the GTP binding site. The segment at 37 to 41 (GITQH) is G2. Residues 76–79 (DTPG) form a G3 region. GTP contacts are provided by residues 76 to 80 (DTPGH) and 130 to 133 (NKID). Residues 130 to 133 (NKID) are G4. Positions 198-200 (SAK) are G5.

This sequence belongs to the TRAFAC class translation factor GTPase superfamily. Classic translation factor GTPase family. IF-2 subfamily.

In terms of biological role, function in general translation initiation by promoting the binding of the formylmethionine-tRNA to ribosomes. Seems to function along with eIF-2. This chain is Probable translation initiation factor IF-2, found in Methanobrevibacter smithii (strain ATCC 35061 / DSM 861 / OCM 144 / PS).